We begin with the raw amino-acid sequence, 259 residues long: Leucine-rich repeat-containing protein 61 (259 aa).

LRR repeat units lie at residues 32–53 (SILLLKLRGLGLADLGCLGECL), 54–75 (GLEWLDLSGNALTHLGPLASLR), 76–97 (QLAVLNVSNNRLTGLEPLATCE), and 98–119 (NLQSLNAAGNLLATPGQLQCLA). Residues 138–178 (NPLCANPSYWAAVRELLPGLKVIDGERVIGRGSEFYQLCRD) form the LRRCT domain.

The polypeptide is Leucine-rich repeat-containing protein 61 (LRRC61) (Homo sapiens (Human)).